A 94-amino-acid polypeptide reads, in one-letter code: Small ribosomal subunit protein bS18c (94 aa).

The protein belongs to the bacterial ribosomal protein bS18 family. Part of the 30S ribosomal subunit.

Its subcellular location is the plastid. It localises to the chloroplast. This Manihot esculenta (Cassava) protein is Small ribosomal subunit protein bS18c.